We begin with the raw amino-acid sequence, 684 residues long: DNA ligase (684 aa).

NAD(+) contacts are provided by residues 34-38 (DFQYD), 83-84 (SL), and Glu117. Lys119 functions as the N6-AMP-lysine intermediate in the catalytic mechanism. Arg140, Glu186, Lys300, and Lys324 together coordinate NAD(+). Zn(2+)-binding residues include Cys418, Cys421, Cys436, and Cys442. The BRCT domain maps to 601 to 684 (PVNLNFDGMK…EMLGEVGSNE (84 aa)).

This sequence belongs to the NAD-dependent DNA ligase family. LigA subfamily. Requires Mg(2+) as cofactor. It depends on Mn(2+) as a cofactor.

It catalyses the reaction NAD(+) + (deoxyribonucleotide)n-3'-hydroxyl + 5'-phospho-(deoxyribonucleotide)m = (deoxyribonucleotide)n+m + AMP + beta-nicotinamide D-nucleotide.. Functionally, DNA ligase that catalyzes the formation of phosphodiester linkages between 5'-phosphoryl and 3'-hydroxyl groups in double-stranded DNA using NAD as a coenzyme and as the energy source for the reaction. It is essential for DNA replication and repair of damaged DNA. In Chlorobium phaeobacteroides (strain BS1), this protein is DNA ligase.